The chain runs to 95 residues: Large ribosomal subunit protein bL25 (95 aa).

It belongs to the bacterial ribosomal protein bL25 family. Part of the 50S ribosomal subunit; part of the 5S rRNA/L5/L18/L25 subcomplex. Contacts the 5S rRNA. Binds to the 5S rRNA independently of L5 and L18.

In terms of biological role, this is one of the proteins that binds to the 5S RNA in the ribosome where it forms part of the central protuberance. The protein is Large ribosomal subunit protein bL25 of Shewanella sediminis (strain HAW-EB3).